The sequence spans 379 residues: Glutamate 5-kinase (379 aa).

An ATP-binding site is contributed by lysine 17. Substrate is bound by residues serine 57, aspartate 144, and asparagine 156. 176 to 177 contributes to the ATP binding site; the sequence is SD. A PUA domain is found at 282-359; that stretch reads SGILMIDQGA…EEIESILGYE (78 aa).

Belongs to the glutamate 5-kinase family.

The protein resides in the cytoplasm. The enzyme catalyses L-glutamate + ATP = L-glutamyl 5-phosphate + ADP. It participates in amino-acid biosynthesis; L-proline biosynthesis; L-glutamate 5-semialdehyde from L-glutamate: step 1/2. Its function is as follows. Catalyzes the transfer of a phosphate group to glutamate to form L-glutamate 5-phosphate. The sequence is that of Glutamate 5-kinase from Bartonella henselae (strain ATCC 49882 / DSM 28221 / CCUG 30454 / Houston 1) (Rochalimaea henselae).